We begin with the raw amino-acid sequence, 31 residues long: Cytochrome b6-f complex subunit 6 (31 aa).

Residues 4-24 (IISYFGLLLATLTFTIVLFVG) form a helical membrane-spanning segment.

This sequence belongs to the PetL family. As to quaternary structure, the 4 large subunits of the cytochrome b6-f complex are cytochrome b6, subunit IV (17 kDa polypeptide, PetD), cytochrome f and the Rieske protein, while the 4 small subunits are PetG, PetL, PetM and PetN. The complex functions as a dimer.

It is found in the plastid. It localises to the chloroplast thylakoid membrane. Functionally, component of the cytochrome b6-f complex, which mediates electron transfer between photosystem II (PSII) and photosystem I (PSI), cyclic electron flow around PSI, and state transitions. PetL is important for photoautotrophic growth as well as for electron transfer efficiency and stability of the cytochrome b6-f complex. This Staurastrum punctulatum (Green alga) protein is Cytochrome b6-f complex subunit 6.